The primary structure comprises 551 residues: DNA ligase (551 aa).

ATP is bound at residue Glu-246. Catalysis depends on Lys-248, which acts as the N6-AMP-lysine intermediate. Residues Arg-253, Arg-268, Glu-298, Phe-337, Arg-414, and Lys-420 each contribute to the ATP site.

It belongs to the ATP-dependent DNA ligase family. Mg(2+) serves as cofactor.

The catalysed reaction is ATP + (deoxyribonucleotide)n-3'-hydroxyl + 5'-phospho-(deoxyribonucleotide)m = (deoxyribonucleotide)n+m + AMP + diphosphate.. DNA ligase that seals nicks in double-stranded DNA during DNA replication, DNA recombination and DNA repair. In Methanobrevibacter smithii (strain ATCC 35061 / DSM 861 / OCM 144 / PS), this protein is DNA ligase.